We begin with the raw amino-acid sequence, 309 residues long: Ornithine carbamoyltransferase (309 aa).

Residues 56–59 (STRT), glutamine 83, arginine 107, and 134–137 (HPCQ) each bind carbamoyl phosphate. L-ornithine is bound by residues asparagine 165, aspartate 223, and 227–228 (SM). Residues 263 to 264 (CL) and arginine 291 each bind carbamoyl phosphate.

This sequence belongs to the aspartate/ornithine carbamoyltransferase superfamily. OTCase family.

It is found in the cytoplasm. It catalyses the reaction carbamoyl phosphate + L-ornithine = L-citrulline + phosphate + H(+). Its pathway is amino-acid biosynthesis; L-arginine biosynthesis; L-arginine from L-ornithine and carbamoyl phosphate: step 1/3. Its function is as follows. Reversibly catalyzes the transfer of the carbamoyl group from carbamoyl phosphate (CP) to the N(epsilon) atom of ornithine (ORN) to produce L-citrulline. This chain is Ornithine carbamoyltransferase, found in Burkholderia cenocepacia (strain HI2424).